The primary structure comprises 247 residues: Cytochrome c oxidase subunit 2 (247 aa).

Residues 1-11 (MLLIINNIINN) form the signal peptide. Residues 12-38 (DVPTPWGVYFQDSATPNHEGIIELHDN) lie on the Mitochondrial intermembrane side of the membrane. The helical transmembrane segment at 39–59 (IMFYLVLILCLVSWLLFSIVK) threads the bilayer. The Mitochondrial matrix segment spans residues 60-78 (DGSKNPLPHKYLVHGQTIE). A helical membrane pass occupies residues 79–101 (IIWTILPALVLLVIAFPSFILLY). The Mitochondrial intermembrane segment spans residues 102–247 (LCDEVISPAM…KEFLTWLNEQ (146 aa)). Cu cation-binding residues include histidine 182, cysteine 217, glutamate 219, cysteine 221, histidine 225, and methionine 228. Glutamate 219 is a Mg(2+) binding site.

It belongs to the cytochrome c oxidase subunit 2 family. As to quaternary structure, component of the cytochrome c oxidase (complex IV, CIV), a multisubunit enzyme composed of a catalytic core of 3 subunits and several supernumerary subunits. The complex exists as a monomer or a dimer and forms supercomplexes (SCs) in the inner mitochondrial membrane with ubiquinol-cytochrome c oxidoreductase (cytochrome b-c1 complex, complex III, CIII). Cu cation is required as a cofactor. Post-translationally, the signal sequence of COX2 is processed by IMP1.

It localises to the mitochondrion inner membrane. The enzyme catalyses 4 Fe(II)-[cytochrome c] + O2 + 8 H(+)(in) = 4 Fe(III)-[cytochrome c] + 2 H2O + 4 H(+)(out). Functionally, component of the cytochrome c oxidase, the last enzyme in the mitochondrial electron transport chain which drives oxidative phosphorylation. The respiratory chain contains 3 multisubunit complexes succinate dehydrogenase (complex II, CII), ubiquinol-cytochrome c oxidoreductase (cytochrome b-c1 complex, complex III, CIII) and cytochrome c oxidase (complex IV, CIV), that cooperate to transfer electrons derived from NADH and succinate to molecular oxygen, creating an electrochemical gradient over the inner membrane that drives transmembrane transport and the ATP synthase. Cytochrome c oxidase is the component of the respiratory chain that catalyzes the reduction of oxygen to water. Electrons originating from reduced cytochrome c in the intermembrane space (IMS) are transferred via the dinuclear copper A center (CU(A)) of subunit 2 and heme A of subunit 1 to the active site in subunit 1, a binuclear center (BNC) formed by heme A3 and copper B (CU(B)). The BNC reduces molecular oxygen to 2 water molecules using 4 electrons from cytochrome c in the IMS and 4 protons from the mitochondrial matrix. This Wickerhamomyces canadensis (Yeast) protein is Cytochrome c oxidase subunit 2 (COX2).